A 103-amino-acid chain; its full sequence is Cell division protein FtsB (103 aa).

Over 1–3 (MGK) the chain is Cytoplasmic. The chain crosses the membrane as a helical span at residues 4-21 (LTLLLLALLVWLQYSLWF). Residues 22–103 (GKNGIHDYSR…RAATAGQTHR (82 aa)) lie on the Periplasmic side of the membrane. A coiled-coil region spans residues 33-62 (NDDVVAQQATNAKLKARNDQLFAEIDDLNG).

It belongs to the FtsB family. As to quaternary structure, part of a complex composed of FtsB, FtsL and FtsQ.

It is found in the cell inner membrane. In terms of biological role, essential cell division protein. May link together the upstream cell division proteins, which are predominantly cytoplasmic, with the downstream cell division proteins, which are predominantly periplasmic. The polypeptide is Cell division protein FtsB (Salmonella agona (strain SL483)).